The sequence spans 62 residues: Large ribosomal subunit protein eL24 (62 aa).

Residues cysteine 6, cysteine 9, cysteine 32, and cysteine 36 each contribute to the Zn(2+) site. Residues 6 to 36 form a C4-type zinc finger; that stretch reads CSFCEGTIEPGCGKKYVKKDGSVMHFCSSKC.

This sequence belongs to the eukaryotic ribosomal protein eL24 family. As to quaternary structure, part of the 50S ribosomal subunit. Forms a cluster with proteins L3 and L14. Zn(2+) is required as a cofactor.

In terms of biological role, binds to the 23S rRNA. The sequence is that of Large ribosomal subunit protein eL24 from Methanococcus maripaludis (strain C7 / ATCC BAA-1331).